The chain runs to 475 residues: Tubulin gamma chain (475 aa).

142–148 (AGGTGSG) contacts GTP. Residues 455-475 (GKQVSGEGNTSGTVDSRVGAS) form a disordered region.

The protein belongs to the tubulin family.

Its subcellular location is the cytoplasm. The protein localises to the cytoskeleton. It is found in the microtubule organizing center. Tubulin is the major constituent of microtubules. The gamma chain is found at microtubule organizing centers (MTOC) such as the spindle poles, suggesting that it is involved in the minus-end nucleation of microtubule assembly. The chain is Tubulin gamma chain (TUBG1) from Physcomitrium patens (Spreading-leaved earth moss).